The following is a 297-amino-acid chain: Probable endonuclease 4 (297 aa).

Residues His69, His110, Glu145, Asp179, His182, His214, Asp227, His229, and Glu259 each contribute to the Zn(2+) site.

Belongs to the AP endonuclease 2 family. Requires Zn(2+) as cofactor.

The enzyme catalyses Endonucleolytic cleavage to 5'-phosphooligonucleotide end-products.. Functionally, endonuclease IV plays a role in DNA repair. It cleaves phosphodiester bonds at apurinic or apyrimidinic (AP) sites, generating a 3'-hydroxyl group and a 5'-terminal sugar phosphate. This Bacillus licheniformis (strain ATCC 14580 / DSM 13 / JCM 2505 / CCUG 7422 / NBRC 12200 / NCIMB 9375 / NCTC 10341 / NRRL NRS-1264 / Gibson 46) protein is Probable endonuclease 4.